Here is a 410-residue protein sequence, read N- to C-terminus: Formyl-CoA:oxalate CoA-transferase (410 aa).

Residues 18–19 (QS), 72–75 (LNTK), 96–98 (NFG), R104, and 136–139 (KAYE) each bind CoA. D168 functions as the Nucleophile in the catalytic mechanism. Residues 221-245 (PLAEYPNEDFGDEVPRSGNASGGGQ) form a disordered region. 243-245 (GGQ) contacts substrate.

The protein belongs to the CoA-transferase III family. Frc subfamily. Homodimer.

It carries out the reaction formyl-CoA + oxalate = oxalyl-CoA + formate. It participates in metabolic intermediate degradation; oxalate degradation; CO(2) and formate from oxalate: step 1/2. Its function is as follows. Involved in the catabolism of oxalate and in the adapatation to low pH via the induction of the oxalate-dependent acid tolerance response (ATR). Catalyzes the transfer of the CoA moiety from formyl-CoA to oxalate. This chain is Formyl-CoA:oxalate CoA-transferase, found in Streptomyces coelicolor (strain ATCC BAA-471 / A3(2) / M145).